A 212-amino-acid polypeptide reads, in one-letter code: Protein-L-isoaspartate O-methyltransferase (212 aa).

Residue Ser60 is part of the active site.

The protein belongs to the methyltransferase superfamily. L-isoaspartyl/D-aspartyl protein methyltransferase family.

The protein localises to the cytoplasm. It carries out the reaction [protein]-L-isoaspartate + S-adenosyl-L-methionine = [protein]-L-isoaspartate alpha-methyl ester + S-adenosyl-L-homocysteine. Functionally, catalyzes the methyl esterification of L-isoaspartyl residues in peptides and proteins that result from spontaneous decomposition of normal L-aspartyl and L-asparaginyl residues. It plays a role in the repair and/or degradation of damaged proteins. The sequence is that of Protein-L-isoaspartate O-methyltransferase from Methanococcus maripaludis (strain C6 / ATCC BAA-1332).